The primary structure comprises 558 residues: Glutamine-dependent NAD(+) synthetase (558 aa).

Residues 2-262 (FTIALAQLNP…LALLSYDLSS (261 aa)) enclose the CN hydrolase domain. The active-site Proton acceptor; for glutaminase activity is glutamate 42. Lysine 117 acts as the For glutaminase activity in catalysis. Tyrosine 123 is a binding site for L-glutamine. The active-site Nucleophile; for glutaminase activity is cysteine 153. Residues serine 190 and lysine 196 each coordinate L-glutamine. Residues 284-558 (ALVLGVGDYL…IAQAFHPQGS (275 aa)) are ligase. 304 to 311 (GLSGGIDS) lines the ATP pocket. Asparagine 387 contacts deamido-NAD(+). An ATP-binding site is contributed by threonine 411. Glutamate 416 and lysine 526 together coordinate deamido-NAD(+).

The protein in the C-terminal section; belongs to the NAD synthetase family.

The enzyme catalyses deamido-NAD(+) + L-glutamine + ATP + H2O = L-glutamate + AMP + diphosphate + NAD(+) + H(+). Its pathway is cofactor biosynthesis; NAD(+) biosynthesis; NAD(+) from deamido-NAD(+) (L-Gln route): step 1/1. Catalyzes the ATP-dependent amidation of deamido-NAD to form NAD. Uses L-glutamine as a nitrogen source. In Synechocystis sp. (strain ATCC 27184 / PCC 6803 / Kazusa), this protein is Glutamine-dependent NAD(+) synthetase.